A 240-amino-acid polypeptide reads, in one-letter code: Eukaryotic translation initiation factor 3 subunit K (240 aa).

The 181-residue stretch at 41-221 (YDKDIVLTIL…TIKTRNIDEK (181 aa)) folds into the PCI domain.

The protein belongs to the eIF-3 subunit K family. In terms of assembly, component of the eukaryotic translation initiation factor 3 (eIF-3) complex.

The protein localises to the cytoplasm. Functionally, component of the eukaryotic translation initiation factor 3 (eIF-3) complex, which is involved in protein synthesis of a specialized repertoire of mRNAs and, together with other initiation factors, stimulates binding of mRNA and methionyl-tRNAi to the 40S ribosome. The eIF-3 complex specifically targets and initiates translation of a subset of mRNAs involved in cell proliferation. This is Eukaryotic translation initiation factor 3 subunit K from Caenorhabditis elegans.